The sequence spans 298 residues: UDP-3-O-acyl-N-acetylglucosamine deacetylase (298 aa).

Residues His80, His239, and Asp243 each coordinate Zn(2+). His266 serves as the catalytic Proton donor.

The protein belongs to the LpxC family. Zn(2+) serves as cofactor.

The catalysed reaction is a UDP-3-O-[(3R)-3-hydroxyacyl]-N-acetyl-alpha-D-glucosamine + H2O = a UDP-3-O-[(3R)-3-hydroxyacyl]-alpha-D-glucosamine + acetate. The protein operates within glycolipid biosynthesis; lipid IV(A) biosynthesis; lipid IV(A) from (3R)-3-hydroxytetradecanoyl-[acyl-carrier-protein] and UDP-N-acetyl-alpha-D-glucosamine: step 2/6. Functionally, catalyzes the hydrolysis of UDP-3-O-myristoyl-N-acetylglucosamine to form UDP-3-O-myristoylglucosamine and acetate, the committed step in lipid A biosynthesis. The polypeptide is UDP-3-O-acyl-N-acetylglucosamine deacetylase (Blochmanniella floridana).